We begin with the raw amino-acid sequence, 160 residues long: Deoxyuridine 5'-triphosphate nucleotidohydrolase (160 aa).

DUMP contacts are provided by Ser80, Gly93, Asp96, Tyr99, Lys104, Arg149, Phe154, and Gly155.

The protein belongs to the dUTPase family. Homotrimer. Requires Mg(2+) as cofactor.

It carries out the reaction dUTP + H2O = dUMP + diphosphate + H(+). It participates in pyrimidine metabolism; dUMP biosynthesis; dUMP from dCTP (dUTP route): step 2/2. Functionally, involved in nucleotide metabolism via production of dUMP, the immediate precursor of thymidine nucleotides, and decreases the intracellular concentration of dUTP so that uracil cannot be incorporated into DNA. This chain is Deoxyuridine 5'-triphosphate nucleotidohydrolase (DUT1), found in Debaryomyces hansenii (strain ATCC 36239 / CBS 767 / BCRC 21394 / JCM 1990 / NBRC 0083 / IGC 2968) (Yeast).